We begin with the raw amino-acid sequence, 468 residues long: MVLDSGTQVYEQAPPSPPASSPSQHHKLKPSNRNGPPLYPWPQSLAMPLALAVPSALQHQTMWQTFSKLHLEQRSHMKRSESTYSVNSTGRRGRGKAPLGRGCDPGGGTLRPAASLPHIAKIRKDVVSGSNKSPCMLVALRPTNMDQEREKFFQSHYAYNPQFEYQEPMPMSVLEKYQEASGQFMHQAVGIIKAVLEKFGTYENFEAATGGQLLTKCQIWSIVRRYMQKEGCVGEVVVQLSEDLLSQAVMMVENSRPTLAINLTGARQYWLEGMLRHEIGTHYLRGVNNSRQPWHSTEGRQQYGLRPANPTEEGLASLHSVLFRKQPFLWRAALLYYTIHQAAHMSFRQLFQDLEQYVQDEDVRWEYCVRAKRGQTDTSLPGCFSKDQVYLDGILRILRHRQTIDFQLLTSLGKVSYEDVEQLRPHGVLDKTRVPHFMKDLDRYRQQLEHIMTTNRLDEAELGRLLPD.

Over residues 1-10 (MVLDSGTQVY) the composition is skewed to polar residues. 2 disordered regions span residues 1–39 (MVLDSGTQVYEQAPPSPPASSPSQHHKLKPSNRNGPPLY) and 77–112 (MKRSESTYSVNSTGRRGRGKAPLGRGCDPGGGTLRP). Histidine 277 lines the Zn(2+) pocket. Glutamate 278 functions as the Nucleophile in the catalytic mechanism. 2 residues coordinate Zn(2+): histidine 282 and glutamate 313.

It belongs to the peptidase MATCAP family. The cofactor is Zn(2+).

It is found in the cytoplasm. The protein localises to the cytoskeleton. It carries out the reaction C-terminal L-alpha-aminoacyl-L-glutamyl-L-glutamyl-L-tyrosyl-[tubulin] + H2O = C-terminal L-alpha-aminoacyl-L-glutamyl-L-glutamyl-[tubulin] + L-tyrosine. It catalyses the reaction C-terminal L-alpha-aminoacyl-L-glutamyl-L-glutamyl-L-phenylalanyl-[tubulin] + H2O = C-terminal L-alpha-aminoacyl-L-glutamyl-L-glutamyl-[tubulin] + L-phenylalanine. Its function is as follows. Tyrosine carboxypeptidase that removes the C-terminal tyrosine residue of alpha-tubulin, thereby regulating microtubule dynamics and function. Also able to remove the C-terminal phenylalanine residue of alpha-tubulin TUBA8. Recognizes adjacent tubulin dimers along the same protofilament. The polypeptide is Microtubule-associated tyrosine carboxypeptidase 1 (Rattus norvegicus (Rat)).